The following is a 672-amino-acid chain: Segment polarity protein dishevelled homolog mig-5 (672 aa).

Positions cysteine 9 to threonine 91 constitute a DIX domain. 3 disordered regions span residues leucine 97–tyrosine 127, tyrosine 150–tyrosine 174, and aspartate 187–serine 215. The span at proline 98–glutamine 108 shows a compositional bias: polar residues. A compositionally biased stretch (basic and acidic residues) spans tyrosine 160–aspartate 169. The segment covering arginine 191–arginine 202 has biased composition (basic residues). Residues glutamate 226–alanine 294 form the PDZ domain. The 75-residue stretch at proline 427 to aspartate 501 folds into the DEP domain. Residues lysine 604–threonine 672 form a disordered region. Positions glutamate 660–threonine 672 are enriched in polar residues.

The protein belongs to the DSH family.

It localises to the cytoplasm. Its subcellular location is the cell cortex. The protein localises to the cell membrane. The protein resides in the cell junction. Plays a role in the signal transduction pathways mediated by multiple Wnt genes. Functions redundantly with other dishevelled family members throughout development. During embryonic and larval development, controls cell migration and/or cell fate specification of hypodermal cells, hypodermal seam cells, vulval precursor cells and, through distal tip cell migration, somatic gonad precursor cells. In early embryos, regulates the orientation of the mitotic spindle of blastomeres and specifically, along with dsh-2, is required for the correct mitotic spindle orientation of the ABar blastomere division plane. Controls the polarity and the asymmetric localization of downstream components of the wnt/beta-catenin asymmetry pathway, and in particular, controls the asymmetric localization of the wnt receptor lin-17/Frizzled in ectodermal blast B cells. May act redundantly with dsh-2 to regulate the expression and nuclear localization of the beta-catenin homolog wrm-2, but alone seems to be required for the polarity of wrm-2 during the asymmetric cell division of hypodermal seam cells. Also, maintains the polarity and migration of QL neuroblasts in larvae. During the embryonic development of touch receptor neurons, may act redundantly with dsh-1, downstream of wnt signaling ligands and the wnt receptor lin-17/Frizzled, to direct the growth of neurites of touch receptor neurons towards the anterior of the body of the worm and towards the PLM touch receptor neuron and other tail neurons. May play a role in the guidance of posterior D-type motor neuron axons along the anteroposterior axis. In Caenorhabditis elegans, this protein is Segment polarity protein dishevelled homolog mig-5.